Reading from the N-terminus, the 132-residue chain is Small ribosomal subunit protein uS8 (132 aa).

It belongs to the universal ribosomal protein uS8 family. Part of the 30S ribosomal subunit. Contacts proteins S5 and S12.

Functionally, one of the primary rRNA binding proteins, it binds directly to 16S rRNA central domain where it helps coordinate assembly of the platform of the 30S subunit. The chain is Small ribosomal subunit protein uS8 from Anaeromyxobacter sp. (strain Fw109-5).